Consider the following 180-residue polypeptide: Cell division protein SepF (180 aa).

The interval 1 to 66 (MAFSFKSFFG…NRNGFAYDNG (66 aa)) is disordered. A compositionally biased stretch (acidic residues) spans 12-23 (ADDEEEEYEDSG). Positions 24–57 (YEQQPNQGQQQPVNSQQQNTSNQSYSGYNNQNQN) are enriched in low complexity.

It belongs to the SepF family. Homodimer. Interacts with FtsZ.

It is found in the cytoplasm. Functionally, cell division protein that is part of the divisome complex and is recruited early to the Z-ring. Probably stimulates Z-ring formation, perhaps through the cross-linking of FtsZ protofilaments. Its function overlaps with FtsA. The protein is Cell division protein SepF of Oenococcus oeni (strain ATCC BAA-331 / PSU-1).